A 296-amino-acid polypeptide reads, in one-letter code: tRNA (guanine-N(7)-)-methyltransferase (296 aa).

Residues 1 to 26 (MSKRTREESEMEAGPSTASPGVSVSP) form a disordered region. S-adenosyl-L-methionine is bound by residues G101, 124-125 (EI), 168-169 (NS), and L188. D191 is a catalytic residue. 266–268 (TEE) contacts S-adenosyl-L-methionine.

The protein belongs to the class I-like SAM-binding methyltransferase superfamily. TrmB family. Forms a complex with TRM82.

The protein localises to the nucleus. The enzyme catalyses guanosine(46) in tRNA + S-adenosyl-L-methionine = N(7)-methylguanosine(46) in tRNA + S-adenosyl-L-homocysteine. Its pathway is tRNA modification; N(7)-methylguanine-tRNA biosynthesis. Its function is as follows. Catalyzes the formation of N(7)-methylguanine at position 46 (m7G46) in tRNA. The protein is tRNA (guanine-N(7)-)-methyltransferase of Cryptococcus neoformans var. neoformans serotype D (strain JEC21 / ATCC MYA-565) (Filobasidiella neoformans).